A 972-amino-acid polypeptide reads, in one-letter code: C-1-tetrahydrofolate synthase, mitochondrial (972 aa).

The transit peptide at 1–55 (MNVMVSFNQLRNYFLESNSLRPSKWLFQSYGTSSSANILNGKLLARKLQRSVAEE) directs the protein to the mitochondrion. Residues 56–340 (VQALKAKDRN…DLNPLELKKP (285 aa)) form a methylenetetrahydrofolate dehydrogenase and cyclohydrolase region. Residues 84 to 88 (YVRMK) and 131 to 133 (VQL) each bind substrate. NADP(+) is bound by residues 202–204 (GRS) and S227. 299–303 (PGGVG) contacts substrate. The segment at 341 to 972 (VPSDIEIANS…CENGEIVGLS (632 aa)) is formyltetrahydrofolate synthetase. ATP is bound at residue 405–412 (TPFGEGKS).

In the N-terminal section; belongs to the tetrahydrofolate dehydrogenase/cyclohydrolase family. This sequence in the C-terminal section; belongs to the formate--tetrahydrofolate ligase family. In terms of assembly, homodimer.

It is found in the mitochondrion. The catalysed reaction is (6R)-5,10-methylene-5,6,7,8-tetrahydrofolate + NADP(+) = (6R)-5,10-methenyltetrahydrofolate + NADPH. The enzyme catalyses (6R)-5,10-methenyltetrahydrofolate + H2O = (6R)-10-formyltetrahydrofolate + H(+). It catalyses the reaction (6S)-5,6,7,8-tetrahydrofolate + formate + ATP = (6R)-10-formyltetrahydrofolate + ADP + phosphate. Its pathway is one-carbon metabolism; tetrahydrofolate interconversion. Mitochondrial isozyme of C-1-tetrahydrofolate synthase. The trifunctional enzyme catalyzes the interconversion of the one-carbon derivatives of tetrahydrofolate (THF) between different oxidation states by the enzymatic activities 10-formyltetrahydrofolate synthetase, 5,lO-methenyltetrahydrofolate cyclohydrolase, and 5,lO-methylenetetrahydrofolate dehydrogenase. This Schizosaccharomyces pombe (strain 972 / ATCC 24843) (Fission yeast) protein is C-1-tetrahydrofolate synthase, mitochondrial (ade9).